Reading from the N-terminus, the 386-residue chain is MKRQALAAIIASMFALAACGGEPAAQTPAASAEAASSAAQTAAETPAGELPVIDAVTTHAPEVPPAIDRDYPAKVRVKMETVEKTMKMDDGVEYRYWTFDGDVPGRMIRVREGDTVEVEFSNNPSSTVPHNVDFHAATGQGGGAAATFTAPGRTSTFSFKALQPGLYIYHCAVAPVGMHIANGMYGLILVEPKEGLPKVDKEFYIVQGDFYTKGKKGAQGLQPFDMDKAIAEQPEYVVFNGHVGAIAGDNALKAKAGETVRMYVGNGGPNLVSSFHVIGEIFDKVYVEGGKLINENVQSTIVPAGGSAIVEFKVDIPGSYTLVDHSIFRAFNKGALGQLKVEGAENPEIMTQKLSDTAYAGNGAAPAASAPAASAPAASAPAKSDY.

Residues 1 to 18 (MKRQALAAIIASMFALAA) form the signal peptide. Cys19 is lipidated: N-palmitoyl cysteine. Cys19 carries S-diacylglycerol cysteine lipidation. Plastocyanin-like domains follow at residues 97–191 (WTFD…ILVE) and 241–342 (GHVG…LKVE). The Cu cation site is built by His130, His135, His170, Cys171, His179, and Met184. His135 is a substrate binding site. Residue His276 participates in substrate binding. His325 contributes to the Cu cation binding site. Residues 363-386 (GAAPAASAPAASAPAASAPAKSDY) are disordered. Residues 364–386 (AAPAASAPAASAPAASAPAKSDY) show a composition bias toward low complexity. Tandem repeats lie at residues 367-371 (AASAP), 372-376 (AASAP), and 377-381 (AASAP). The tract at residues 367 to 381 (AASAPAASAPAASAP) is 3 X 5 AA tandem repeats of A-A-S-A-P.

The protein belongs to the multicopper oxidase family. As to quaternary structure, homotrimer. It depends on Cu(+) as a cofactor. Cu(2+) serves as cofactor.

The protein localises to the cell outer membrane. The enzyme catalyses nitric oxide + Fe(III)-[cytochrome c] + H2O = Fe(II)-[cytochrome c] + nitrite + 2 H(+). Catalyzes the reduction of nitrite to nitric oxide (NO). It could be essential for growth and survival in oxygen-depleted environments. This chain is Copper-containing nitrite reductase (aniA), found in Neisseria meningitidis serogroup A / serotype 4A (strain DSM 15465 / Z2491).